The following is a 683-amino-acid chain: Leucine-rich repeat and calponin homology domain-containing protein 4 (683 aa).

Positions Met-1–Ala-18 are enriched in low complexity. Positions Met-1–Ala-34 are disordered. LRR repeat units follow at residues Ala-41–Ser-64, Leu-67–Leu-90, Ser-92–Leu-113, Thr-114–Leu-136, Leu-138–Leu-158, Gly-159–Leu-181, Ser-182–Leu-204, Leu-206–Leu-226, and Arg-227–Gly-250. The disordered stretch occupies residues Ala-268–His-292. 6 positions are modified to phosphoserine: Ser-279, Ser-281, Ser-304, Ser-307, Ser-309, and Ser-313. Disordered regions lie at residues Phe-326–Pro-436 and Ser-449–Asp-539. Basic and acidic residues-rich tracts occupy residues Glu-330–Gly-345, Ile-357–Pro-376, and Gly-384–Gln-418. Phosphoserine occurs at positions 432 and 457. A compositionally biased stretch (polar residues) spans Ser-449 to Ser-460. Low complexity-rich tracts occupy residues Ser-461–Gln-481 and Ser-511–Ser-524. A phosphoserine mark is found at Ser-511, Ser-513, Ser-517, Ser-521, and Ser-589. Residues Val-534–Gly-647 form the Calponin-homology (CH) domain. A helical transmembrane segment spans residues Leu-653–Leu-673.

Its subcellular location is the cell membrane. Functionally, accessory protein that regulates signaling by multiple TLRs, acting as a broad-spanning regulator of the innate immune response. In macrophages, binds LPS and promotes proper docking of LPS in lipid raft membrane. May be required for lipid raft maintenance. The polypeptide is Leucine-rich repeat and calponin homology domain-containing protein 4 (Homo sapiens (Human)).